Here is a 156-residue protein sequence, read N- to C-terminus: Non-structural protein 2 (156 aa).

Belongs to the pneumovirus non-structural protein 2 family.

The protein localises to the host cytoplasm. In terms of biological role, plays a major role in antagonizing the type I IFN-mediated antiviral response. May also inhibit viral transcription and RNA replication. The protein is Non-structural protein 2 (1B) of Mus musculus (Mouse).